Consider the following 1138-residue polypeptide: Transmembrane channel-like protein 3 (1138 aa).

Residues 1-15 (MEAAPGTAAAAAKPA) show a composition bias toward low complexity. Disordered stretches follow at residues 1–20 (MEAA…SCKK) and 29–54 (NIYT…DSQD). Topologically, residues 1-155 (MEAAPGTAAA…VASYFIFLRW (155 aa)) are cytoplasmic. Residues 156-176 (LFGINIVLTIMTGAFVVLPEL) form a helical membrane-spanning segment. Over 177 to 202 (LAGAPFGSTVSKTIRQEDLKTAQDLD) the chain is Extracellular. Residues 203-223 (TIWSLGGYLQYSVLFYGYYGS) traverse the membrane as a helical segment. The Cytoplasmic segment spans residues 224-233 (DRKIGKAGYR). Residues 234–254 (LPLAYFLVGMAVFAYSFIILL) form a helical membrane-spanning segment. Residues 255-327 (KKMAKNSRMS…KNLAVTISLR (73 aa)) are Extracellular-facing. N-linked (GlcNAc...) asparagine glycosylation is present at Asn-272. A helical membrane pass occupies residues 328 to 348 (IIANILVLLSLTGSIYIIYFV). The Cytoplasmic segment spans residues 349–369 (VDRSQKLENNKRELTLWEKNE). Residues 370-390 (VSVVVSLITMIAPSAFELVAA) traverse the membrane as a helical segment. Over 391-401 (LEMYHPRTTLR) the chain is Extracellular. Residues 402-422 (FQLARVLVLYLGNLYSLIIAL) form a helical membrane-spanning segment. Topologically, residues 423 to 508 (LDKVNSMSVT…CWETYVGQEM (86 aa)) are cytoplasmic. The chain crosses the membrane as a helical span at residues 509–529 (LKLSIIDMIFTVASILLIDFF). At 530 to 569 (RGLCVRYLSDCWCWDLESKFPEYGEFKIAENVLHLVYNQG) the chain is on the extracellular side. A helical transmembrane segment spans residues 570–590 (MIWMGAFFSPCLPAFNVLKLI). Topologically, residues 591–618 (GLMYLRSWAVLTCNVPHQQVFRASRSNN) are cytoplasmic. The chain crosses the membrane as a helical span at residues 619–639 (FYLAMLLFMLFLCMLPTIFAI). The Extracellular portion of the chain corresponds to 640-676 (ARYKPSLSCGPFSGQEKIYDIVSETIQNDFPAWFNSV). Residues 677 to 697 (IAYISSPVVVLPALLLLFMLI) form a helical membrane-spanning segment. Residues 698–1138 (YYLQSIARSL…EPNELVCSNV (441 aa)) are Cytoplasmic-facing. The span at 753 to 763 (NSEGTRFQSLD) shows a compositional bias: polar residues. 3 disordered regions span residues 753–859 (NSEG…RYPS), 973–1005 (SPHP…DLRP), and 1065–1095 (PKTK…SSND). Basic and acidic residues predominate over residues 764 to 773 (GSDKRPDKDG). Composition is skewed to polar residues over residues 777 to 795 (SQES…SVLN) and 804 to 813 (TRIQTISQTV). A compositionally biased stretch (low complexity) spans 828–845 (TTPTTSASLTPAPSVSSA). Positions 989-998 (HYVKRSHRPR) are enriched in basic residues. Low complexity predominate over residues 1074–1095 (SLTESDSVSIESSSDPQNSSND).

The protein belongs to the TMC family. In terms of tissue distribution, expressed in a range of tissues including cerebrum, cerebellum, retina, cochlea, lung, liver and heart. Also expressed in the apical, medial and basal portions of the basillar papilla.

It is found in the membrane. In terms of biological role, probable component of an ion channel. This chain is Transmembrane channel-like protein 3, found in Gallus gallus (Chicken).